Here is a 129-residue protein sequence, read N- to C-terminus: Large ribosomal subunit protein bL12 (129 aa).

The protein belongs to the bacterial ribosomal protein bL12 family. Homodimer. Part of the ribosomal stalk of the 50S ribosomal subunit. Forms a multimeric L10(L12)X complex, where L10 forms an elongated spine to which 2 to 4 L12 dimers bind in a sequential fashion. Binds GTP-bound translation factors.

Functionally, forms part of the ribosomal stalk which helps the ribosome interact with GTP-bound translation factors. Is thus essential for accurate translation. In Micrococcus luteus (strain ATCC 4698 / DSM 20030 / JCM 1464 / CCM 169 / CCUG 5858 / IAM 1056 / NBRC 3333 / NCIMB 9278 / NCTC 2665 / VKM Ac-2230) (Micrococcus lysodeikticus), this protein is Large ribosomal subunit protein bL12.